The primary structure comprises 218 residues: Glutathione S-transferase Mu 3 (218 aa).

In terms of domain architecture, GST N-terminal spans P2–G88. Residues Y7–W8, W46–K50, and N59–L60 contribute to the glutathione site. A Glycyl lysine isopeptide (Lys-Gly) (interchain with G-Cter in SUMO2) cross-link involves residue K50. K69 participates in a covalent cross-link: Glycyl lysine isopeptide (Lys-Gly) (interchain with G-Cter in SUMO2). Q72–S73 contributes to the glutathione binding site. Positions T90–V208 constitute a GST C-terminal domain.

The protein belongs to the GST superfamily. Mu family. Homodimer.

It localises to the cytoplasm. It carries out the reaction RX + glutathione = an S-substituted glutathione + a halide anion + H(+). Its function is as follows. Conjugation of reduced glutathione to a wide number of exogenous and endogenous hydrophobic electrophiles. This Mus musculus (Mouse) protein is Glutathione S-transferase Mu 3 (Gstm3).